We begin with the raw amino-acid sequence, 294 residues long: 4-hydroxy-tetrahydrodipicolinate synthase (294 aa).

Position 47 (threonine 47) interacts with pyruvate. Residue tyrosine 135 is the Proton donor/acceptor of the active site. The Schiff-base intermediate with substrate role is filled by lysine 163. Threonine 205 contacts pyruvate.

The protein belongs to the DapA family. As to quaternary structure, homotetramer; dimer of dimers.

The protein resides in the cytoplasm. The enzyme catalyses L-aspartate 4-semialdehyde + pyruvate = (2S,4S)-4-hydroxy-2,3,4,5-tetrahydrodipicolinate + H2O + H(+). It functions in the pathway amino-acid biosynthesis; L-lysine biosynthesis via DAP pathway; (S)-tetrahydrodipicolinate from L-aspartate: step 3/4. Its function is as follows. Catalyzes the condensation of (S)-aspartate-beta-semialdehyde [(S)-ASA] and pyruvate to 4-hydroxy-tetrahydrodipicolinate (HTPA). The protein is 4-hydroxy-tetrahydrodipicolinate synthase of Rickettsia felis (strain ATCC VR-1525 / URRWXCal2) (Rickettsia azadi).